A 172-amino-acid chain; its full sequence is Adenine phosphoribosyltransferase (172 aa).

Belongs to the purine/pyrimidine phosphoribosyltransferase family. In terms of assembly, homodimer.

Its subcellular location is the cytoplasm. It catalyses the reaction AMP + diphosphate = 5-phospho-alpha-D-ribose 1-diphosphate + adenine. It functions in the pathway purine metabolism; AMP biosynthesis via salvage pathway; AMP from adenine: step 1/1. In terms of biological role, catalyzes a salvage reaction resulting in the formation of AMP, that is energically less costly than de novo synthesis. In Rippkaea orientalis (strain PCC 8801 / RF-1) (Cyanothece sp. (strain PCC 8801)), this protein is Adenine phosphoribosyltransferase.